The chain runs to 351 residues: MTTSTLQAPTRGWFDVLDDWLKRDRFVFVGWSGLLLFPTAYLAIGGWLTGTTFVTSWYTHGLASSYLEGANFLTAAVSTPADAMGHSLLLLWGPESQGDFIRWCQLGGLWAFVALHGAFALIGFMLRQFEISRLVGIRPYNAIAFSGPIAVFVSVFLIYPLGQSSWFFAPSFGVAAIFRFLLFLQGFHNWTLNPFHMMGVAGILGGALLSAIHGVTVENTLYEDGEQANTFKAFDTTQEEETYSMVTANRFWSQIFGIAFSNKRWLHFFMLFVPVMGLWTSSIGIIGLALNLRAYDFVSQEVRAAEDPEFETFYTKNILLNEGLRAWMAPVDQPHENFVFPEEVLPRGNAL.

Residues 39-59 (TAYLAIGGWLTGTTFVTSWYT) traverse the membrane as a helical segment. H116 is a chlorophyll a binding site. A helical transmembrane segment spans residues 123–139 (GFMLRQFEISRLVGIRP). Pheophytin a contacts are provided by Q128 and N141. The chain crosses the membrane as a helical span at residues 151–164 (VFVSVFLIYPLGQS). Position 196 (H196) interacts with chlorophyll a. The chain crosses the membrane as a helical span at residues 206–226 (GALLSAIHGVTVENTLYEDGE). A plastoquinone contacts are provided by H213 and F260. H213 contacts Fe cation. Residue H267 participates in Fe cation binding. A helical membrane pass occupies residues 277 to 293 (GLWTSSIGIIGLALNLR).

It belongs to the reaction center PufL/M/PsbA/D family. PSII is composed of 1 copy each of membrane proteins PsbA, PsbB, PsbC, PsbD, PsbE, PsbF, PsbH, PsbI, PsbJ, PsbK, PsbL, PsbM, PsbT, PsbX, PsbY, PsbZ, Psb30/Ycf12, peripheral proteins PsbO, CyanoQ (PsbQ), PsbU, PsbV and a large number of cofactors. It forms dimeric complexes. Requires The D1/D2 heterodimer binds P680, chlorophylls that are the primary electron donor of PSII, and subsequent electron acceptors. It shares a non-heme iron and each subunit binds pheophytin, quinone, additional chlorophylls, carotenoids and lipids. There is also a Cl(-1) ion associated with D1 and D2, which is required for oxygen evolution. The PSII complex binds additional chlorophylls, carotenoids and specific lipids. as cofactor.

The protein resides in the host cellular thylakoid membrane. It catalyses the reaction 2 a plastoquinone + 4 hnu + 2 H2O = 2 a plastoquinol + O2. Photosystem II (PSII) is a light-driven water:plastoquinone oxidoreductase that uses light energy to abstract electrons from H(2)O, generating O(2) and a proton gradient subsequently used for ATP formation. It consists of a core antenna complex that captures photons, and an electron transfer chain that converts photonic excitation into a charge separation. The D1/D2 (PsbA/PsbD) reaction center heterodimer binds P680, the primary electron donor of PSII as well as several subsequent electron acceptors. D2 is needed for assembly of a stable PSII complex. This Synechococcus protein is Photosystem II D2 protein (psbD).